The primary structure comprises 91 residues: RING finger protein Z (91 aa).

Residue G2 is the site of N-myristoyl glycine; by host attachment. The segment at 35–71 (CKCCWFQDKNLVECSDHYLCLKCISSMLKRGKNCEIC) adopts an RING-type; atypical zinc-finger fold. A PTAP/PSAP motif motif is present at residues 85–88 (PTAP).

Belongs to the arenaviridae Z protein family. Interacts with protein NP; this interaction probably directs the encapsidated genome to budding sites. Interacts (via RING domain) with polymerase L; this interaction inhibits viral transcription and replication, Z partially blocks the product exit tunnel for the releasing nascent RNA product. Interacts with the glycoprotein complex; this interaction plays a role in virion budding. Interacts with host eIF4E; this interaction results in eIF4E reduced affinity for its substrate, the 5'-m7 G cap structure. Interacts (via late-budding domain) with host TSG101; this interaction is essential for budding and release of viral particles. Interacts with host RPLP0; this interaction may serve to load ribosome-like particles inside the virion. Interacts with host PML; this interaction induces PML bodies redistribution in the cytoplasm upon viral infection. Myristoylation is required for the role of RING finger protein Z in assembly and budding.

It localises to the virion. It is found in the host cytoplasm. Its subcellular location is the host perinuclear region. The protein localises to the host cell membrane. Functionally, plays a crucial role in virion assembly and budding. Expressed late in the virus life cycle, it acts as an inhibitor of viral transcription and RNA synthesis by interacting with the viral polymerase L. Presumably recruits the NP encapsidated genome to cellular membranes at budding sites via direct interaction with NP. Plays critical roles in the final steps of viral release by interacting with host TSG101, a member of the vacuolar protein-sorting pathway and using other cellular host proteins involved in vesicle formation pathway. The budding of the virus progeny occurs after association of protein Z with the viral glycoprotein complex SSP-GP1-GP2 at the cell periphery, step that requires myristoylation of protein Z. Also selectively represses protein production by associating with host eIF4E. In cell-based minigenome assay, has an inhibitory effect on the ribonucleoprotein machinery (vRNP), which is responsible for the replication and transcription of the viral genome. The polypeptide is RING finger protein Z (Latino mammarenavirus (isolate Rat/Bolivia/MARU 1924/1965) (LATV)).